A 169-amino-acid chain; its full sequence is Diuretic hormone 44 (169 aa).

A signal peptide spans 1–18 (MILLGILASTTIIGLTSS). Positions 19–96 (APLSSYERRD…ARRKQERDQR (78 aa)) are excised as a propeptide. The stretch at 83–108 (MLELARRKQERDQRQIEENRRFLENI) forms a coiled coil. Gln-97 carries the post-translational modification Pyrrolidone carboxylic acid. Position 108 is an isoleucine amide (Ile-108). Positions 109-169 (GKRSVPVSDA…RVQANELRLL (61 aa)) are excised as a propeptide.

Post-translationally, residues Ile-66 to Gly-109 may constitute another form of the DH44 peptide, which has not been detected yet. As to expression, expressed in brain, ventral ganglia and the retrocerebral complex (at protein level).

Its subcellular location is the secreted. Regulation of fluid secretion. The sequence is that of Diuretic hormone 44 from Camponotus floridanus (Florida carpenter ant).